A 260-amino-acid polypeptide reads, in one-letter code: UPF0246 protein Bcep1808_2308 (260 aa).

This sequence belongs to the UPF0246 family.

This Burkholderia vietnamiensis (strain G4 / LMG 22486) (Burkholderia cepacia (strain R1808)) protein is UPF0246 protein Bcep1808_2308.